The sequence spans 403 residues: Chorismate synthase (403 aa).

2 residues coordinate NADP(+): Arg40 and Arg46. Residues 140-142 (RSS), 261-262 (QA), Gly305, 320-324 (KPIST), and Arg346 contribute to the FMN site.

This sequence belongs to the chorismate synthase family. As to quaternary structure, homotetramer. It depends on FMNH2 as a cofactor.

It catalyses the reaction 5-O-(1-carboxyvinyl)-3-phosphoshikimate = chorismate + phosphate. Its pathway is metabolic intermediate biosynthesis; chorismate biosynthesis; chorismate from D-erythrose 4-phosphate and phosphoenolpyruvate: step 7/7. In terms of biological role, catalyzes the anti-1,4-elimination of the C-3 phosphate and the C-6 proR hydrogen from 5-enolpyruvylshikimate-3-phosphate (EPSP) to yield chorismate, which is the branch point compound that serves as the starting substrate for the three terminal pathways of aromatic amino acid biosynthesis. This reaction introduces a second double bond into the aromatic ring system. This Corynebacterium diphtheriae (strain ATCC 700971 / NCTC 13129 / Biotype gravis) protein is Chorismate synthase.